A 95-amino-acid chain; its full sequence is Aspartyl/glutamyl-tRNA(Asn/Gln) amidotransferase subunit C (95 aa).

The protein belongs to the GatC family. In terms of assembly, heterotrimer of A, B and C subunits.

It catalyses the reaction L-glutamyl-tRNA(Gln) + L-glutamine + ATP + H2O = L-glutaminyl-tRNA(Gln) + L-glutamate + ADP + phosphate + H(+). It carries out the reaction L-aspartyl-tRNA(Asn) + L-glutamine + ATP + H2O = L-asparaginyl-tRNA(Asn) + L-glutamate + ADP + phosphate + 2 H(+). Functionally, allows the formation of correctly charged Asn-tRNA(Asn) or Gln-tRNA(Gln) through the transamidation of misacylated Asp-tRNA(Asn) or Glu-tRNA(Gln) in organisms which lack either or both of asparaginyl-tRNA or glutaminyl-tRNA synthetases. The reaction takes place in the presence of glutamine and ATP through an activated phospho-Asp-tRNA(Asn) or phospho-Glu-tRNA(Gln). This chain is Aspartyl/glutamyl-tRNA(Asn/Gln) amidotransferase subunit C, found in Syntrophotalea carbinolica (strain DSM 2380 / NBRC 103641 / GraBd1) (Pelobacter carbinolicus).